A 71-amino-acid polypeptide reads, in one-letter code: Phosphatidylinositol N-acetylglucosaminyltransferase subunit Y (71 aa).

Met1 is a topological domain (cytoplasmic). Residues 2–21 (FFSLPVLTVLIPLVSLTGLL) traverse the membrane as a helical segment. Residues 22–44 (YSASVEEDFPNGCTSTASLCFYS) lie on the Lumenal side of the membrane. Residues 45–65 (LLLPITLPVYVFFHLWTWMGL) traverse the membrane as a helical segment. The Cytoplasmic segment spans residues 66–71 (KLFRHN).

Component of the glycosylphosphatidylinositol-N-acetylglucosaminyltransferase (GPI-GnT) complex composed at least by PIGA, PIGC, PIGH, PIGP, PIGQ, PIGY and DPM2.

The protein resides in the endoplasmic reticulum membrane. Its pathway is glycolipid biosynthesis; glycosylphosphatidylinositol-anchor biosynthesis. Its function is as follows. Part of the glycosylphosphatidylinositol-N-acetylglucosaminyltransferase (GPI-GnT) complex that catalyzes the transfer of N-acetylglucosamine from UDP-N-acetylglucosamine to phosphatidylinositol and participates in the first step of GPI biosynthesis. May act by regulating the catalytic subunit PIGA. The polypeptide is Phosphatidylinositol N-acetylglucosaminyltransferase subunit Y (Xenopus tropicalis (Western clawed frog)).